Reading from the N-terminus, the 2193-residue chain is Genome polyprotein (2193 aa).

The tract at residues 1 to 22 is disordered; that stretch reads MGSQVSTQRSGSHENSNSATEG. A lipid anchor (N-myristoyl glycine; by host) is attached at Gly2. The Cytoplasmic segment spans residues 2–1503; that stretch reads GSQVSTQRSG…HLNRAVLVMQ (1502 aa). Positions 568–588 are amphipathic alpha-helix; it reads RVADVIESSIGDSVSRALTQA. Residues His883 and Asp901 each act as for protease 2A activity in the active site. Residues Cys918 and Cys920 each coordinate Zn(2+). Residue Cys972 is the For protease 2A activity of the active site. The Zn(2+) site is built by Cys978 and His980. The region spanning 1216–1374 is the SF3 helicase domain; sequence EKRMNNYMQF…SKTDLGRLDA (159 aa). 1240–1247 provides a ligand contact to ATP; sequence GSPGTGKS. Zn(2+) contacts are provided by Cys1381, Cys1392, and Cys1397. Residues 1381 to 1397 form a C4-type; degenerate zinc finger; the sequence is CSENNTANFKRCSPLVC. The stretch at 1504–1519 is an intramembrane region; sequence SIATVVAVVSLVYVIY. At 1520–2193 the chain is on the cytoplasmic side; the sequence is KLFAGFQGAY…NLRRNWLELF (674 aa). Position 1529 is an O-(5'-phospho-RNA)-tyrosine (Tyr1529). A Peptidase C3 domain is found at 1549–1727; it reads GPSLDFALSL…FCAGLKRSYF (179 aa). Residues His1588, Glu1619, and Cys1695 each act as for protease 3C activity in the active site. In terms of domain architecture, RdRp catalytic spans 1958-2073; that stretch reads GSLFAFDYSG…ASYPFPIDCL (116 aa). Positions 1964 and 2060 each coordinate Mg(2+).

It belongs to the picornaviruses polyprotein family. In terms of assembly, interacts with capsid protein VP1 and capsid protein VP3 to form heterotrimeric protomers. As to quaternary structure, interacts with capsid protein VP0, and capsid protein VP3 to form heterotrimeric protomers. Five protomers subsequently associate to form pentamers which serve as building blocks for the capsid. Interacts with capsid protein VP2, capsid protein VP3 and capsid protein VP4 following cleavage of capsid protein VP0. Interacts with host SCARB2. Interacts with host ARF6; this interaction mediates viral endocytosis. Interacts with capsid protein VP1 and capsid protein VP3 in the mature capsid. Interacts with host SCARB2. In terms of assembly, interacts with capsid protein VP0 and capsid protein VP1 to form heterotrimeric protomers. Five protomers subsequently associate to form pentamers which serve as building blocks for the capsid. Interacts with capsid protein VP4 in the mature capsid. Interacts with protein 2C; this interaction may be important for virion morphogenesis. As to quaternary structure, interacts with capsid protein VP1 and capsid protein VP3. Homodimer. In terms of assembly, interacts with host BAX; this interaction activates the mitochondrial apoptotic pathway. Interacts with host ILF2. As to quaternary structure, homohexamer; forms a hexameric ring structure with 6-fold symmetry characteristic of AAA+ ATPases. Interacts (via N-terminus) with host RTN3 (via reticulon domain); this interaction is important for viral replication. Interacts with capsid protein VP3; this interaction may be important for virion morphogenesis. Interacts with protein 3CD. In terms of assembly, homodimer. Interacts with host GBF1. Interacts (via GOLD domain) with host ACBD3 (via GOLD domain); this interaction allows the formation of a viral protein 3A/ACBD3 heterotetramer with a 2:2 stoichiometry, which will stimulate the recruitment of host PI4KB in order to synthesize PI4P at the viral RNA replication sites. As to quaternary structure, interacts with RNA-directed RNA polymerase. Interacts with host IFIH1/MDA5; this interaction inhibits host IFIH1. In terms of assembly, interacts with protein 3AB and with RNA-directed RNA polymerase. As to quaternary structure, interacts with Viral protein genome-linked and with protein 3CD. It depends on Mg(2+) as a cofactor. Post-translationally, specific enzymatic cleavages in vivo by the viral proteases yield processing intermediates and the mature proteins. Myristoylation is required for the formation of pentamers during virus assembly. Further assembly of 12 pentamers and a molecule of genomic RNA generates the provirion. In terms of processing, during virion maturation, immature virions are rendered infectious following cleavage of VP0 into VP4 and VP2. This maturation seems to be an autocatalytic event triggered by the presence of RNA in the capsid and it is followed by a conformational change infectious virion. Post-translationally, myristoylation is required during RNA encapsidation and formation of the mature virus particle. VPg is uridylylated by the polymerase into VPg-pUpU. This acts as a nucleotide-peptide primer for the genomic RNA replication.

The protein resides in the virion. It localises to the host cytoplasm. Its subcellular location is the host cytoplasmic vesicle membrane. The protein localises to the host nucleus. It carries out the reaction a ribonucleoside 5'-triphosphate + H2O = a ribonucleoside 5'-diphosphate + phosphate + H(+). The catalysed reaction is Selective cleavage of Tyr-|-Gly bond in the picornavirus polyprotein.. The enzyme catalyses RNA(n) + a ribonucleoside 5'-triphosphate = RNA(n+1) + diphosphate. It catalyses the reaction Selective cleavage of Gln-|-Gly bond in the poliovirus polyprotein. In other picornavirus reactions Glu may be substituted for Gln, and Ser or Thr for Gly.. With respect to regulation, replication or transcription is subject to high level of random mutations by the nucleotide analog ribavirin. Functionally, forms an icosahedral capsid of pseudo T=3 symmetry with capsid proteins VP2 and VP3. The capsid is 300 Angstroms in diameter, composed of 60 copies of each capsid protein and enclosing the viral positive strand RNA genome. Capsid protein VP1 mainly forms the vertices of the capsid. Capsid protein VP1, together with VP2, interacts with host cell receptor SCARB2 to provide virion attachment to target host cells. This attachment induces virion internalization. After binding to its receptor, the capsid undergoes conformational changes. Capsid protein VP1 N-terminus (that contains an amphipathic alpha-helix) and capsid protein VP4 are externalized. Together, they shape a pore in the host membrane through which viral genome is translocated to host cell cytoplasm. Forms an icosahedral capsid of pseudo T=3 symmetry with capsid proteins VP2 and VP3. The capsid is 300 Angstroms in diameter, composed of 60 copies of each capsid protein and enclosing the viral positive strand RNA genome. Capsid protein VP2, together with VP1, interacts with host cell receptor SCARB2 to provide virion attachment to target host cells. In terms of biological role, forms an icosahedral capsid of pseudo T=3 symmetry with capsid proteins VP2 and VP3. The capsid is 300 Angstroms in diameter, composed of 60 copies of each capsid protein and enclosing the viral positive strand RNA genome. Its function is as follows. Lies on the inner surface of the capsid shell. After binding to the host receptor, the capsid undergoes conformational changes. Capsid protein VP4 is released, Capsid protein VP1 N-terminus is externalized, and together, they shape a pore in the host membrane through which the viral genome is translocated into the host cell cytoplasm. Functionally, component of immature procapsids, which is cleaved into capsid proteins VP4 and VP2 after maturation. Allows the capsid to remain inactive before the maturation step. Cysteine protease that cleaves viral polyprotein and specific host proteins. It is responsible for the autocatalytic cleavage between the P1 and P2 regions, which is the first cleavage occurring in the polyprotein. Also cleaves the host translation initiation factor EIF4G1, in order to shut down the capped cellular mRNA translation. Inhibits the host nucleus-cytoplasm protein and RNA trafficking by cleaving host members of the nuclear pores. Counteracts stress granule formation probably by antagonizing its assembly or promoting its dissassembly. Cleaves and inhibits host IFIH1/MDA5, thereby inhibiting the type-I IFN production and the establishment of the antiviral state. Cleaves and inhibits host MAVS, thereby inhibiting the type-I IFN production and the establishment of the antiviral state. In terms of biological role, plays an essential role in the virus replication cycle by acting as a viroporin. Creates a pore in the host endoplasmic reticulum and as a consequence releases Ca2+ in the cytoplasm of infected cell. In turn, high levels of cytoplasmic calcium may trigger membrane trafficking and transport of viral ER-associated proteins to viroplasms, sites of viral genome replication. Its function is as follows. Induces and associates with structural rearrangements of intracellular membranes. Displays RNA-binding, nucleotide binding and NTPase activities. May play a role in virion morphogenesis and viral RNA encapsidation by interacting with the capsid protein VP3. Functionally, localizes the viral replication complex to the surface of membranous vesicles. Together with protein 3CD binds the Cis-Active RNA Element (CRE) which is involved in RNA synthesis initiation. Acts as a cofactor to stimulate the activity of 3D polymerase, maybe through a nucleid acid chaperone activity. Localizes the viral replication complex to the surface of membranous vesicles. It inhibits host cell endoplasmic reticulum-to-Golgi apparatus transport and causes the disassembly of the Golgi complex, possibly through GBF1 interaction. This would result in depletion of MHC, trail receptors and IFN receptors at the host cell surface. Plays an essential role in viral RNA replication by recruiting ACBD3 and PI4KB at the viral replication sites, thereby allowing the formation of the rearranged membranous structures where viral replication takes place. In terms of biological role, acts as a primer for viral RNA replication and remains covalently bound to viral genomic RNA. VPg is uridylylated prior to priming replication into VPg-pUpU. The oriI viral genomic sequence may act as a template for this. The VPg-pUpU is then used as primer on the genomic RNA poly(A) by the RNA-dependent RNA polymerase to replicate the viral genome. During genome replication, the VPg-RNA linkage is removed by the host TDP2, thereby accelerating replication. During the late stage of the replication cycle, host TDP2 is excluded from sites of viral RNA synthesis and encapsidation, allowing for the generation of progeny virions. Its function is as follows. Involved in the viral replication complex and viral polypeptide maturation. It exhibits protease activity with a specificity and catalytic efficiency that is different from protease 3C. Protein 3CD lacks polymerase activity. Protein 3CD binds to the 5'UTR of the viral genome. Functionally, major viral protease that mediates proteolytic processing of the polyprotein. Cleaves host EIF5B, contributing to host translation shutoff. Also cleaves host PABPC1, contributing to host translation shutoff. Disassembles host cytoplasmic stress granules by cleaving host G3BP1, although this effect is less prononced than the inhibition induced by protease 2A. Cleaves host RIGI and thus contributes to the inhibition of type I interferon production. Cleaves host IRF7 and thus contributes to the inhibition of type I interferon production. Cleaves host HNRNPA1 thereby increasing the translation of apoptosis protease activating factor APAF1, leading to apoptosis of the host cell. Cleaves host NLRP1, triggers host N-glycine-mediated degradation of the autoinhibitory NLRP1 N-terminal fragment. Replicates the viral genomic RNA on the surface of intracellular membranes. May form linear arrays of subunits that propagate along a strong head-to-tail interaction called interface-I. Covalently attaches UMP to a tyrosine of VPg, which is used to prime RNA synthesis. The positive stranded RNA genome is first replicated at virus induced membranous vesicles, creating a dsRNA genomic replication form. This dsRNA is then used as template to synthesize positive stranded RNA genomes. ss(+)RNA genomes are either translated, replicated or encapsidated. This chain is Genome polyprotein, found in Human enterovirus 71 (strain 7423/MS/87) (EV71).